A 151-amino-acid polypeptide reads, in one-letter code: Methylated-DNA--protein-cysteine methyltransferase (151 aa).

The active-site Nucleophile; methyl group acceptor is C119.

Belongs to the MGMT family.

It localises to the cytoplasm. The enzyme catalyses a 6-O-methyl-2'-deoxyguanosine in DNA + L-cysteinyl-[protein] = S-methyl-L-cysteinyl-[protein] + a 2'-deoxyguanosine in DNA. It carries out the reaction a 4-O-methyl-thymidine in DNA + L-cysteinyl-[protein] = a thymidine in DNA + S-methyl-L-cysteinyl-[protein]. Its function is as follows. Involved in the cellular defense against the biological effects of O6-methylguanine (O6-MeG) and O4-methylthymine (O4-MeT) in DNA. Repairs the methylated nucleobase in DNA by stoichiometrically transferring the methyl group to a cysteine residue in the enzyme. This is a suicide reaction: the enzyme is irreversibly inactivated. This chain is Methylated-DNA--protein-cysteine methyltransferase, found in Saccharolobus islandicus (strain Y.N.15.51 / Yellowstone #2) (Sulfolobus islandicus).